A 282-amino-acid polypeptide reads, in one-letter code: Bifunctional protein FolD (282 aa).

Residue 163–165 (GRS) participates in NADP(+) binding.

Belongs to the tetrahydrofolate dehydrogenase/cyclohydrolase family. As to quaternary structure, homodimer.

The catalysed reaction is (6R)-5,10-methylene-5,6,7,8-tetrahydrofolate + NADP(+) = (6R)-5,10-methenyltetrahydrofolate + NADPH. It carries out the reaction (6R)-5,10-methenyltetrahydrofolate + H2O = (6R)-10-formyltetrahydrofolate + H(+). It functions in the pathway one-carbon metabolism; tetrahydrofolate interconversion. In terms of biological role, catalyzes the oxidation of 5,10-methylenetetrahydrofolate to 5,10-methenyltetrahydrofolate and then the hydrolysis of 5,10-methenyltetrahydrofolate to 10-formyltetrahydrofolate. The protein is Bifunctional protein FolD of Leuconostoc citreum (strain KM20).